Reading from the N-terminus, the 216-residue chain is DNA replication complex GINS protein PSF3 (216 aa).

The segment at 1 to 16 (MSEAYFRVESGALGPE) is not essential for folding and stability of GINS complex, but may regulate accessibility to the central complex pore.

It belongs to the GINS3/PSF3 family. As to quaternary structure, component of the GINS complex which is a heterotetramer of GINS1, GINS2, GINS3 and GINS4. Forms a stable subcomplex with GINS2. GINS complex interacts with DNA primase in vitro. Component of the CMG helicase complex, a hexameric ring of related MCM2-7 subunits stabilized by CDC45 and the tetrameric GINS complex.

Its subcellular location is the nucleus. It is found in the chromosome. In terms of biological role, required for correct functioning of the GINS complex, a complex that plays an essential role in the initiation of DNA replication, and progression of DNA replication forks. GINS complex is a core component of CDC45-MCM-GINS (CMG) helicase, the molecular machine that unwinds template DNA during replication, and around which the replisome is built. The protein is DNA replication complex GINS protein PSF3 (GINS3) of Bos taurus (Bovine).